A 208-amino-acid chain; its full sequence is Translation initiation factor 2 subunit beta (208 aa).

The TRAM domain occupies 145–203; sequence VIEEGETYELRIESVGSKGDGIAKVDKYLIFVPNTSKGEIVKAKVKKISGTLAFAEIVE.

The protein belongs to the eIF-2-beta/eIF-5 family. Heterotrimer composed of an alpha, a beta and a gamma chain.

Functionally, eIF-2 functions in the early steps of protein synthesis by forming a ternary complex with GTP and initiator tRNA. The sequence is that of Translation initiation factor 2 subunit beta from Methanothrix thermoacetophila (strain DSM 6194 / JCM 14653 / NBRC 101360 / PT) (Methanosaeta thermophila).